Consider the following 130-residue polypeptide: MPEFKVVVADPEKARSYQVEVKGEDAEKLIGKRIGDVIDGEIVGLPGYKLKITGGTDKDGFPMRPDIHGPVRVRLLLSGPPGFRPERKGERRRKTVRGNTISEDIVQVNTVIVEYGDKPVEELLGEGGEE.

The segment at 78-98 (SGPPGFRPERKGERRRKTVRG) is disordered.

This sequence belongs to the eukaryotic ribosomal protein eS6 family.

In Methanopyrus kandleri (strain AV19 / DSM 6324 / JCM 9639 / NBRC 100938), this protein is Small ribosomal subunit protein eS6.